The primary structure comprises 562 residues: Probable sesquiterpene synthase (562 aa).

Positions 315, 319, and 467 each coordinate Mg(2+). The short motif at 315-319 (DDIYD) is the DDXXD motif element.

This sequence belongs to the terpene synthase family. Tpsa subfamily. The cofactor is Mg(2+). Mn(2+) is required as a cofactor.

Functionally, sesquiterpene synthase. The chain is Probable sesquiterpene synthase (SesquiTPS) from Santalum spicatum (Australian sandalwood).